Reading from the N-terminus, the 498-residue chain is ATP synthase subunit beta, chloroplastic (498 aa).

172–179 (GGAGVGKT) contacts ATP.

Belongs to the ATPase alpha/beta chains family. As to quaternary structure, F-type ATPases have 2 components, CF(1) - the catalytic core - and CF(0) - the membrane proton channel. CF(1) has five subunits: alpha(3), beta(3), gamma(1), delta(1), epsilon(1). CF(0) has four main subunits: a(1), b(1), b'(1) and c(9-12).

It localises to the plastid. The protein resides in the chloroplast thylakoid membrane. It catalyses the reaction ATP + H2O + 4 H(+)(in) = ADP + phosphate + 5 H(+)(out). Produces ATP from ADP in the presence of a proton gradient across the membrane. The catalytic sites are hosted primarily by the beta subunits. The protein is ATP synthase subunit beta, chloroplastic of Daucus carota (Wild carrot).